A 316-amino-acid polypeptide reads, in one-letter code: NAD kinase 1 (316 aa).

Residue D67 is the Proton acceptor of the active site. Residue 67–68 (DG) participates in NAD(+) binding. The disordered stretch occupies residues 132–151 (RSAEERADAPTPLQQPDVED). NAD(+) contacts are provided by residues 160–161 (ND), R190, and D192.

The protein belongs to the NAD kinase family. A divalent metal cation is required as a cofactor.

It localises to the cytoplasm. It catalyses the reaction NAD(+) + ATP = ADP + NADP(+) + H(+). Functionally, involved in the regulation of the intracellular balance of NAD and NADP, and is a key enzyme in the biosynthesis of NADP. Catalyzes specifically the phosphorylation on 2'-hydroxyl of the adenosine moiety of NAD to yield NADP. The sequence is that of NAD kinase 1 from Parasynechococcus marenigrum (strain WH8102).